A 422-amino-acid polypeptide reads, in one-letter code: Signal recognition particle receptor FtsY (422 aa).

A disordered region spans residues 39–86 (PERGVVDRSGGYTASSGITFSQTPTTQPAERIDTSGLPAVGDDATVPR). The span at 50–66 (YTASSGITFSQTPTTQP) shows a compositional bias: polar residues. GTP-binding positions include 230 to 237 (GVNGTGKT), 312 to 316 (DTAGR), and 374 to 377 (TKLD).

Belongs to the GTP-binding SRP family. FtsY subfamily. In terms of assembly, part of the signal recognition particle protein translocation system, which is composed of SRP and FtsY.

Its subcellular location is the cell membrane. The protein localises to the cytoplasm. It catalyses the reaction GTP + H2O = GDP + phosphate + H(+). Functionally, involved in targeting and insertion of nascent membrane proteins into the cytoplasmic membrane. Acts as a receptor for the complex formed by the signal recognition particle (SRP) and the ribosome-nascent chain (RNC). The chain is Signal recognition particle receptor FtsY from Mycobacterium bovis (strain ATCC BAA-935 / AF2122/97).